The chain runs to 313 residues: Olfactory receptor 1J2 (313 aa).

Over 1–25 (MSPENQSSVSEFLLLGLPIRPEQQA) the chain is Extracellular. An N-linked (GlcNAc...) asparagine glycan is attached at asparagine 5. The helical transmembrane segment at 26 to 49 (VFFTLFLGMYLTTVLGNLLIMLLI) threads the bilayer. Over 50–57 (QLDSHLHT) the chain is Cytoplasmic. A helical transmembrane segment spans residues 58 to 79 (PMYFFLSHLALTDISFSSVTVP). Residues 80 to 100 (KMLMDMRTKYKSILYEECISQ) lie on the Extracellular side of the membrane. Cysteine 97 and cysteine 189 are disulfide-bonded. A helical transmembrane segment spans residues 101–120 (MYFFIFFTDLDSFLITSMAY). At 121–139 (DRYVAICHPLHYTVIMREE) the chain is on the cytoplasmic side. A helical transmembrane segment spans residues 140–158 (LCVFLVAVSWILSCASSLS). The Extracellular portion of the chain corresponds to 159–196 (HTLLLTRLSFCAANTIPHVFCDLAALLKLSCSDIFLNE). Residues 197–219 (LVMFTVGVVVITLPFMCILVSYG) form a helical membrane-spanning segment. Residues 220–236 (YIGATILRVPSTKGIHK) are Cytoplasmic-facing. The chain crosses the membrane as a helical span at residues 237 to 259 (ALSTCGSHLSVVSLYYGSIFGQY). The Extracellular segment spans residues 260 to 272 (LFPTVSSSIDKDV). Residues 273 to 292 (IVALMYTVVTPMLNPFIYSL) form a helical membrane-spanning segment. The Cytoplasmic segment spans residues 293-313 (RNRDMKEALGKLFSRATFFSW).

Belongs to the G-protein coupled receptor 1 family.

The protein localises to the cell membrane. In terms of biological role, odorant receptor. The chain is Olfactory receptor 1J2 (OR1J2) from Homo sapiens (Human).